The chain runs to 463 residues: Asparagine--tRNA ligase (463 aa).

This sequence belongs to the class-II aminoacyl-tRNA synthetase family. As to quaternary structure, homodimer.

It localises to the cytoplasm. It catalyses the reaction tRNA(Asn) + L-asparagine + ATP = L-asparaginyl-tRNA(Asn) + AMP + diphosphate + H(+). This is Asparagine--tRNA ligase from Clostridium botulinum (strain ATCC 19397 / Type A).